The following is a 442-amino-acid chain: MRGNFMSSIEKLGGLKQRLTITVSAEEVDKAYKSRLLKVARTAKIPKFRPGKASPAVVEKLYGKAILQEVGSELIQSSLREAVEEHQLRVAGAPDIKMDKILRGEPFKYVVNFEVYPEITLESLAGETIERTQVEITEEDLDKMLEALRKQYAEWKEVDRPAKADDRVIIDFEGTLDGKPFERGSAKDFQLELGSKRMIAGFEEGIEGMKPGESKALDITFPADYPSEDLAGKAAVFNITLQKVMAPELPVLDEQFAERLGIKEGGLEALRQKVRTNMEKEVHHHMENKLKMAVLDKLIERNPIEVPESLIEAEIDHLQQMTRQQVAMQTHKPDEAKKMELPRDPYREQATKRVKLGLLLAEVVKQHKIKADPEQLRARVEEVAASYQDPEKVISWYYSNKQMLSEIESVVLEDQAVAQLMSELEVEDQAIPYEEAVKQIQQ.

The PPIase FKBP-type domain occupies 165–250 (DDRVIIDFEG…LQKVMAPELP (86 aa)).

The protein belongs to the FKBP-type PPIase family. Tig subfamily.

The protein resides in the cytoplasm. The enzyme catalyses [protein]-peptidylproline (omega=180) = [protein]-peptidylproline (omega=0). Its function is as follows. Involved in protein export. Acts as a chaperone by maintaining the newly synthesized protein in an open conformation. Functions as a peptidyl-prolyl cis-trans isomerase. The polypeptide is Trigger factor (Coxiella burnetii (strain CbuK_Q154) (Coxiella burnetii (strain Q154))).